The following is a 488-amino-acid chain: Aspartyl/glutamyl-tRNA(Asn/Gln) amidotransferase subunit B (488 aa).

It belongs to the GatB/GatE family. GatB subfamily. Heterotrimer of A, B and C subunits.

The catalysed reaction is L-glutamyl-tRNA(Gln) + L-glutamine + ATP + H2O = L-glutaminyl-tRNA(Gln) + L-glutamate + ADP + phosphate + H(+). It catalyses the reaction L-aspartyl-tRNA(Asn) + L-glutamine + ATP + H2O = L-asparaginyl-tRNA(Asn) + L-glutamate + ADP + phosphate + 2 H(+). In terms of biological role, allows the formation of correctly charged Asn-tRNA(Asn) or Gln-tRNA(Gln) through the transamidation of misacylated Asp-tRNA(Asn) or Glu-tRNA(Gln) in organisms which lack either or both of asparaginyl-tRNA or glutaminyl-tRNA synthetases. The reaction takes place in the presence of glutamine and ATP through an activated phospho-Asp-tRNA(Asn) or phospho-Glu-tRNA(Gln). This Ralstonia nicotianae (strain ATCC BAA-1114 / GMI1000) (Ralstonia solanacearum) protein is Aspartyl/glutamyl-tRNA(Asn/Gln) amidotransferase subunit B.